The primary structure comprises 530 residues: 2,3-bisphosphoglycerate-independent phosphoglycerate mutase (530 aa).

D15 and S65 together coordinate Mn(2+). S65 acts as the Phosphoserine intermediate in catalysis. Substrate contacts are provided by residues H126, 155–156, R187, R193, 257–260, and K330; these read RD and RPDR. D397, H401, D438, H439, and H456 together coordinate Mn(2+).

The protein belongs to the BPG-independent phosphoglycerate mutase family. As to quaternary structure, monomer. Mn(2+) is required as a cofactor.

It catalyses the reaction (2R)-2-phosphoglycerate = (2R)-3-phosphoglycerate. It participates in carbohydrate degradation; glycolysis; pyruvate from D-glyceraldehyde 3-phosphate: step 3/5. Catalyzes the interconversion of 2-phosphoglycerate and 3-phosphoglycerate. This chain is 2,3-bisphosphoglycerate-independent phosphoglycerate mutase, found in Synechococcus sp. (strain JA-3-3Ab) (Cyanobacteria bacterium Yellowstone A-Prime).